A 130-amino-acid polypeptide reads, in one-letter code: Small ribosomal subunit protein uS11 (130 aa).

Belongs to the universal ribosomal protein uS11 family. In terms of assembly, part of the 30S ribosomal subunit. Interacts with proteins S7 and S18. Binds to IF-3.

Located on the platform of the 30S subunit, it bridges several disparate RNA helices of the 16S rRNA. Forms part of the Shine-Dalgarno cleft in the 70S ribosome. The polypeptide is Small ribosomal subunit protein uS11 (Rippkaea orientalis (strain PCC 8801 / RF-1) (Cyanothece sp. (strain PCC 8801))).